Here is a 343-residue protein sequence, read N- to C-terminus: S-adenosylmethionine:tRNA ribosyltransferase-isomerase (343 aa).

Belongs to the QueA family. As to quaternary structure, monomer.

Its subcellular location is the cytoplasm. It carries out the reaction 7-aminomethyl-7-carbaguanosine(34) in tRNA + S-adenosyl-L-methionine = epoxyqueuosine(34) in tRNA + adenine + L-methionine + 2 H(+). It functions in the pathway tRNA modification; tRNA-queuosine biosynthesis. Transfers and isomerizes the ribose moiety from AdoMet to the 7-aminomethyl group of 7-deazaguanine (preQ1-tRNA) to give epoxyqueuosine (oQ-tRNA). The chain is S-adenosylmethionine:tRNA ribosyltransferase-isomerase from Dehalococcoides mccartyi (strain CBDB1).